A 79-amino-acid polypeptide reads, in one-letter code: D-alanyl carrier protein (79 aa).

Positions 1–76 (MEEQVLSLLE…RVMAYVKKRV (76 aa)) constitute a Carrier domain. An O-(pantetheine 4'-phosphoryl)serine modification is found at S34.

This sequence belongs to the DltC family. Post-translationally, 4'-phosphopantetheine is transferred from CoA to a specific serine of apo-DCP.

Its subcellular location is the cytoplasm. It functions in the pathway cell wall biogenesis; lipoteichoic acid biosynthesis. In terms of biological role, carrier protein involved in the D-alanylation of lipoteichoic acid (LTA). The loading of thioester-linked D-alanine onto DltC is catalyzed by D-alanine--D-alanyl carrier protein ligase DltA. The DltC-carried D-alanyl group is further transferred to cell membrane phosphatidylglycerol (PG) by forming an ester bond, probably catalyzed by DltD. D-alanylation of LTA plays an important role in modulating the properties of the cell wall in Gram-positive bacteria, influencing the net charge of the cell wall. In Abiotrophia defectiva (Streptococcus defectivus), this protein is D-alanyl carrier protein.